The primary structure comprises 435 residues: D-amino acid dehydrogenase (435 aa).

3–17 (VLILGSGVIGTTSAW) provides a ligand contact to FAD.

The protein belongs to the DadA oxidoreductase family. It depends on FAD as a cofactor.

The enzyme catalyses a D-alpha-amino acid + A + H2O = a 2-oxocarboxylate + AH2 + NH4(+). It participates in amino-acid degradation; D-alanine degradation; NH(3) and pyruvate from D-alanine: step 1/1. Functionally, oxidative deamination of D-amino acids. The polypeptide is D-amino acid dehydrogenase (Xylella fastidiosa (strain M23)).